A 481-amino-acid chain; its full sequence is Proline--tRNA ligase (481 aa).

The protein belongs to the class-II aminoacyl-tRNA synthetase family. ProS type 3 subfamily. In terms of assembly, homodimer.

It is found in the cytoplasm. It catalyses the reaction tRNA(Pro) + L-proline + ATP = L-prolyl-tRNA(Pro) + AMP + diphosphate. In terms of biological role, catalyzes the attachment of proline to tRNA(Pro) in a two-step reaction: proline is first activated by ATP to form Pro-AMP and then transferred to the acceptor end of tRNA(Pro). This Chlorobium phaeobacteroides (strain BS1) protein is Proline--tRNA ligase.